Consider the following 1941-residue polypeptide: Myosin-7B (1941 aa).

The 51-residue stretch at 30–80 (DGKKRVWVPDEQDAYVEAEVKTEATGGKVTVETKDQKVLTVRETEMQPMNP) folds into the Myosin N-terminal SH3-like domain. Residues 84–785 (DLLEDMAMMT…LLGILEELRD (702 aa)) enclose the Myosin motor domain. 177–184 (GESGAGKT) serves as a coordination point for ATP. Actin-binding stretches follow at residues 662–684 (LNKL…VPNE) and 764–778 (QFGH…GLLG). The IQ domain maps to 788-817 (LAKVLTLLQARSRGRLMRLEYQRMLGGRDA). The stretch at 846–1935 (LLRSAQAEEE…KLRARSRDAL (1090 aa)) forms a coiled coil. The tract at residues 1887–1941 (RQFEEAEQQASTNLAKYRKAQHELDDAEERADMAETQANKLRARSRDALGPKHKE) is disordered. Positions 1930–1941 (RSRDALGPKHKE) are enriched in basic and acidic residues.

This sequence belongs to the TRAFAC class myosin-kinesin ATPase superfamily. Myosin family. Muscle myosin is a hexameric protein that consists of 2 heavy chain subunits (MHC), 2 alkali light chain subunits (MLC) and 2 regulatory light chain subunits (MLC-2).

The protein resides in the membrane. Involved in muscle contraction. The chain is Myosin-7B (Myh7b) from Mus musculus (Mouse).